We begin with the raw amino-acid sequence, 344 residues long: Biotin synthase (344 aa).

In terms of domain architecture, Radical SAM core spans alanine 40–arginine 267. Residues cysteine 55, cysteine 59, and cysteine 62 each coordinate [4Fe-4S] cluster. Cysteine 99, cysteine 130, cysteine 190, and arginine 262 together coordinate [2Fe-2S] cluster.

Belongs to the radical SAM superfamily. Biotin synthase family. In terms of assembly, homodimer. The cofactor is [4Fe-4S] cluster. [2Fe-2S] cluster serves as cofactor.

The catalysed reaction is (4R,5S)-dethiobiotin + (sulfur carrier)-SH + 2 reduced [2Fe-2S]-[ferredoxin] + 2 S-adenosyl-L-methionine = (sulfur carrier)-H + biotin + 2 5'-deoxyadenosine + 2 L-methionine + 2 oxidized [2Fe-2S]-[ferredoxin]. It functions in the pathway cofactor biosynthesis; biotin biosynthesis; biotin from 7,8-diaminononanoate: step 2/2. Functionally, catalyzes the conversion of dethiobiotin (DTB) to biotin by the insertion of a sulfur atom into dethiobiotin via a radical-based mechanism. The protein is Biotin synthase of Xanthomonas campestris pv. campestris (strain 8004).